Consider the following 398-residue polypeptide: Dual-specificity RNA methyltransferase RlmN (398 aa).

Glutamate 121 serves as the catalytic Proton acceptor. The 244-residue stretch at 127–370 (ETDRGTLCVS…VRTPRGRDIL (244 aa)) folds into the Radical SAM core domain. A disulfide bridge links cysteine 134 with cysteine 373. The [4Fe-4S] cluster site is built by cysteine 141, cysteine 145, and cysteine 148. S-adenosyl-L-methionine contacts are provided by residues 199–200 (GE), serine 231, 253–255 (SLH), and asparagine 330. Catalysis depends on cysteine 373, which acts as the S-methylcysteine intermediate.

Belongs to the radical SAM superfamily. RlmN family. [4Fe-4S] cluster is required as a cofactor.

It localises to the cytoplasm. The enzyme catalyses adenosine(2503) in 23S rRNA + 2 reduced [2Fe-2S]-[ferredoxin] + 2 S-adenosyl-L-methionine = 2-methyladenosine(2503) in 23S rRNA + 5'-deoxyadenosine + L-methionine + 2 oxidized [2Fe-2S]-[ferredoxin] + S-adenosyl-L-homocysteine. It catalyses the reaction adenosine(37) in tRNA + 2 reduced [2Fe-2S]-[ferredoxin] + 2 S-adenosyl-L-methionine = 2-methyladenosine(37) in tRNA + 5'-deoxyadenosine + L-methionine + 2 oxidized [2Fe-2S]-[ferredoxin] + S-adenosyl-L-homocysteine. Its function is as follows. Specifically methylates position 2 of adenine 2503 in 23S rRNA and position 2 of adenine 37 in tRNAs. m2A2503 modification seems to play a crucial role in the proofreading step occurring at the peptidyl transferase center and thus would serve to optimize ribosomal fidelity. The polypeptide is Dual-specificity RNA methyltransferase RlmN (Rhodopseudomonas palustris (strain BisB5)).